The chain runs to 536 residues: MMSGGPSDATHRKRRRRRGPKGSGVDGPSIPRAVTTNGAGPEEEEVVEGKAMELDAGMSAAEVGGVVGSHLSETRFDQCPVSPLSLKAIKDAGYEKMTQVQEATLPIILQGEDVLAKAKTGTGKTVAFLLPAIELLSTLPRSPSINLLVICPTRELANQVAAEARKLLKYHRSLGVQVVIGGTKLPQEQRSMQSNPCQILVATPGRLKDHLENTPGFSNRIKGVKVLVLDEADRLLDMGFRRDIEKIIAFIPKERQTLLFSATVPEEVRQISHIAMKRGYKFINTVKEGDEETHSQVSQMYMVAPLDLHFSILYNVLKKHIAEDADYKVIVFCTTAMVTKLVAEVLSQLKLNIREIHSRKSQSARTKVSDEFRKSKGLILVSSDVSARGVDYPDVTLVIQVGLPADREQYIHRLGRTGRKGKDGLGLLLLAPWETYFLNSVQDLSVSQAVVPTIDSSIQTGVKDALGRVETKSKESAYQAWLGYYNSNKAISRDKSRLVRLAEEFSQSMGLAIPPAIPKLILRKMGLNNVPGLRSV.

Positions 1 to 44 (MMSGGPSDATHRKRRRRRGPKGSGVDGPSIPRAVTTNGAGPEEE) are disordered. A compositionally biased stretch (basic residues) spans 11–20 (HRKRRRRRGP). The Q motif motif lies at 74-102 (TRFDQCPVSPLSLKAIKDAGYEKMTQVQE). Residues 105–282 (LPIILQGEDV…HIAMKRGYKF (178 aa)) enclose the Helicase ATP-binding domain. Residue 118–125 (AKTGTGKT) participates in ATP binding. The DEAD box signature appears at 230–233 (DEAD). Positions 316-466 (VLKKHIAEDA…SIQTGVKDAL (151 aa)) constitute a Helicase C-terminal domain.

Belongs to the DEAD box helicase family.

It catalyses the reaction ATP + H2O = ADP + phosphate + H(+). This Oryza sativa subsp. japonica (Rice) protein is DEAD-box ATP-dependent RNA helicase 26.